A 118-amino-acid chain; its full sequence is UPF0102 protein CMM_1377 (118 aa).

It belongs to the UPF0102 family.

In Clavibacter michiganensis subsp. michiganensis (strain NCPPB 382), this protein is UPF0102 protein CMM_1377.